The primary structure comprises 855 residues: Homeobox-leucine zipper protein HOX33 (855 aa).

The disordered stretch occupies residues 1-21 (MAAAAVGGRGERLSSSSPTAA). Positions 26-89 (DAGKYVRYTP…NRRCREKQRK (64 aa)) form a DNA-binding region, homeobox. Positions 84–126 (REKQRKEASRLQTVNRKLNAMNKLLMEENDRLQKQVSRLVYEN) form a coiled coil. One can recognise an START domain in the interval 168–390 (DANNPAGLLA…LRHIRQIAHE (223 aa)).

The protein belongs to the HD-ZIP homeobox family. Class III subfamily. In terms of tissue distribution, expressed in seedlings, roots, stems, leaf sheaths and blades and panicles.

It localises to the nucleus. Probable transcription factor. This chain is Homeobox-leucine zipper protein HOX33 (HOX33), found in Oryza sativa subsp. indica (Rice).